The sequence spans 402 residues: Zinc finger CCCH domain-containing protein 35 (402 aa).

2 C3H1-type zinc fingers span residues 117-144 (CYSGTACPDFRKGGCKRGDACEFAHGVF) and 152-176 (RYRTQPCKDGTACRRRVCFFAHTPD). Disordered regions lie at residues 180-211 (VLPPSQQQGSNSPRGCGGGGAGAAASPLAESY) and 232-258 (SSPTSTLVSPPRSPPSESPPLSPDAAG). Polar residues predominate over residues 183–192 (PSQQQGSNSP). Residues 232–241 (SSPTSTLVSP) are compositionally biased toward low complexity. The segment covering 242–253 (PRSPPSESPPLS) has biased composition (pro residues).

This is Zinc finger CCCH domain-containing protein 35 from Oryza sativa subsp. japonica (Rice).